Reading from the N-terminus, the 355-residue chain is S-adenosylmethionine:tRNA ribosyltransferase-isomerase (355 aa).

The protein belongs to the QueA family. Monomer.

The protein localises to the cytoplasm. It carries out the reaction 7-aminomethyl-7-carbaguanosine(34) in tRNA + S-adenosyl-L-methionine = epoxyqueuosine(34) in tRNA + adenine + L-methionine + 2 H(+). It participates in tRNA modification; tRNA-queuosine biosynthesis. Its function is as follows. Transfers and isomerizes the ribose moiety from AdoMet to the 7-aminomethyl group of 7-deazaguanine (preQ1-tRNA) to give epoxyqueuosine (oQ-tRNA). This chain is S-adenosylmethionine:tRNA ribosyltransferase-isomerase, found in Pectobacterium atrosepticum (strain SCRI 1043 / ATCC BAA-672) (Erwinia carotovora subsp. atroseptica).